A 741-amino-acid chain; its full sequence is Homeobox protein AHox1 (741 aa).

Disordered regions lie at residues 1 to 30, 61 to 96, 146 to 183, 203 to 226, 357 to 383, 476 to 501, and 616 to 642; these read MEKM…KSSS, KRRL…NFCR, VNPL…KSCC, ADSD…INQD, KTEE…PIRT, FDFP…NPQT, and QYGH…GTVK. The segment covering 7–19 has biased composition (low complexity); it reads KSVSPVPFNNSNN. Basic and acidic residues predominate over residues 63-78; it reads RLLDPQNKKKQNRFER. Residues 79–92 show a composition bias toward polar residues; it reads YSSSNHAQEQSSEE. Over residues 169–181 the composition is skewed to low complexity; that stretch reads SFSSSSEASDSKS. Residues 363 to 375 are compositionally biased toward polar residues; the sequence is RSPSETKQYSPDA. Over residues 616-629 the composition is skewed to polar residues; that stretch reads QYGHMSSSQNPHSE. Over residues 630–639 the composition is skewed to basic and acidic residues; sequence TQNRSEEVRG. The homeobox DNA-binding region spans 645-704; that stretch reads RKWNRAVFSLMQRRGLEKSFQSQKYVAKPERRKLADALSLTDAQVKIWFQNRRMKWRQEI. The interval 722–741 is disordered; that stretch reads EIEKEKTQTPSDEGEVINVD.

The protein belongs to the H2.0 homeobox family. As to expression, expressed in the tissues of endodermal origin.

The protein resides in the nucleus. This chain is Homeobox protein AHox1 (AHOX1), found in Halocynthia roretzi (Sea squirt).